Here is a 230-residue protein sequence, read N- to C-terminus: Orotidine 5'-phosphate decarboxylase (230 aa).

Substrate-binding positions include aspartate 11, lysine 34, 61-70, threonine 117, arginine 179, glutamine 188, glycine 208, and arginine 209; that span reads DLKLHDIPNT. The Proton donor role is filled by lysine 63.

This sequence belongs to the OMP decarboxylase family. Type 1 subfamily. As to quaternary structure, homodimer.

The enzyme catalyses orotidine 5'-phosphate + H(+) = UMP + CO2. The protein operates within pyrimidine metabolism; UMP biosynthesis via de novo pathway; UMP from orotate: step 2/2. Catalyzes the decarboxylation of orotidine 5'-monophosphate (OMP) to uridine 5'-monophosphate (UMP). The sequence is that of Orotidine 5'-phosphate decarboxylase from Streptococcus pyogenes serotype M49 (strain NZ131).